A 65-amino-acid polypeptide reads, in one-letter code: UPF0434 protein BBta_0300 (65 aa).

This sequence belongs to the UPF0434 family.

This Bradyrhizobium sp. (strain BTAi1 / ATCC BAA-1182) protein is UPF0434 protein BBta_0300.